The primary structure comprises 258 residues: tRNA pseudouridine synthase A (258 aa).

Residue Asp-55 is the Nucleophile of the active site. Tyr-113 is a binding site for substrate.

This sequence belongs to the tRNA pseudouridine synthase TruA family. As to quaternary structure, homodimer.

It carries out the reaction uridine(38/39/40) in tRNA = pseudouridine(38/39/40) in tRNA. In terms of biological role, formation of pseudouridine at positions 38, 39 and 40 in the anticodon stem and loop of transfer RNAs. The sequence is that of tRNA pseudouridine synthase A from Limosilactobacillus fermentum (strain NBRC 3956 / LMG 18251) (Lactobacillus fermentum).